The following is a 259-amino-acid chain: 3-deoxy-manno-octulosonate cytidylyltransferase 1 (259 aa).

It belongs to the KdsB family.

It is found in the cytoplasm. The catalysed reaction is 3-deoxy-alpha-D-manno-oct-2-ulosonate + CTP = CMP-3-deoxy-beta-D-manno-octulosonate + diphosphate. It participates in nucleotide-sugar biosynthesis; CMP-3-deoxy-D-manno-octulosonate biosynthesis; CMP-3-deoxy-D-manno-octulosonate from 3-deoxy-D-manno-octulosonate and CTP: step 1/1. It functions in the pathway bacterial outer membrane biogenesis; lipopolysaccharide biosynthesis. Its function is as follows. Activates KDO (a required 8-carbon sugar) for incorporation into bacterial lipopolysaccharide in Gram-negative bacteria. This chain is 3-deoxy-manno-octulosonate cytidylyltransferase 1, found in Hydrogenovibrio crunogenus (strain DSM 25203 / XCL-2) (Thiomicrospira crunogena).